The following is a 271-amino-acid chain: Nus factor SuhB (271 aa).

Mg(2+) is bound by residues glutamate 67, aspartate 86, and leucine 88. Glutamate 67 is a binding site for substrate. Substrate contacts are provided by residues 88–91, arginine 187, and aspartate 216; that span reads LDGT.

This sequence belongs to the inositol monophosphatase superfamily. Homodimer. The rRNA transcription and antitermination complex (rrnTAC) consists of RNA polymerase (RNAP), NusA, NusB, NusE (rpsJ), NusG, SubB, ribosomal protein S4, DNA and precursor rRNA; S4 is more flexible than other subunits. Interacts with the ribosome and with RNA polymerase. Mg(2+) is required as a cofactor.

The protein localises to the cytoplasm. It carries out the reaction a myo-inositol phosphate + H2O = myo-inositol + phosphate. Part of the processive rRNA transcription and antitermination complex (rrnTAC). The complex forms an RNA-chaperone ring around the RNA exit tunnel of RNA polymerase (RNAP). It supports rapid transcription and antitermination of rRNA operons, cotranscriptional rRNA folding, and annealing of distal rRNA regions to allow correct ribosome biogenesis. This subunit may play a central role in organizing the structure. In terms of biological role, a ribosome-associated protein, deletion of which alters the expression of 494 genes, suggesting a role in global gene regulation. Involved in control of pathogenesis-related genes. Required for the activation of virulence factors associated with acute infections (type 3 secretion system, T3SS) while suppressing virulence factors associated with chronic infections (biofilm formation and type 6 secretion system, T6SS). It probably acts at a post-transcriptional level. The protein is Nus factor SuhB of Pseudomonas aeruginosa (strain ATCC 15692 / DSM 22644 / CIP 104116 / JCM 14847 / LMG 12228 / 1C / PRS 101 / PAO1).